Consider the following 2137-residue polypeptide: Autophagy-related protein 2 (2137 aa).

Disordered stretches follow at residues 108–137, 296–325, 339–384, 410–531, 612–640, and 666–749; these read FGAAKDENPNSRRPSQAGTHDSSSDHILPT, PPTSPTTPVQPKSSEPSSRIPSPLPGQASD, EPSQ…GYLE, LHDD…NGGE, ALTEKRSFGEQSECPSEAREPDLTPLSPT, and DRRH…KSQP. 2 stretches are compositionally biased toward polar residues: residues 118–128 and 301–315; these read SRRPSQAGTHD and TTPVQPKSSEPSSRI. A compositionally biased stretch (acidic residues) spans 413-423; it reads DDLEPPEDLVP. A compositionally biased stretch (polar residues) spans 429–440; that stretch reads PPSSETLRSQTP. Residues 488–505 show a composition bias toward low complexity; it reads TPDVSHSASSPSGSLPSR. Over residues 510–526 the composition is skewed to polar residues; it reads RQTAPPSESGSVGSSDV. Positions 666–675 are enriched in basic and acidic residues; sequence DRRHTDETVR. The segment covering 696–706 has biased composition (low complexity); the sequence is SSTESELLSST.

Belongs to the ATG2 family.

The protein resides in the preautophagosomal structure membrane. The protein localises to the endoplasmic reticulum membrane. The enzyme catalyses a 1,2-diacyl-sn-glycero-3-phosphocholine(in) = a 1,2-diacyl-sn-glycero-3-phosphocholine(out). It catalyses the reaction a 1,2-diacyl-sn-glycero-3-phospho-L-serine(in) = a 1,2-diacyl-sn-glycero-3-phospho-L-serine(out). The catalysed reaction is a 1,2-diacyl-sn-glycero-3-phosphoethanolamine(in) = a 1,2-diacyl-sn-glycero-3-phosphoethanolamine(out). Functionally, lipid transfer protein required for autophagosome completion and peroxisome degradation. Tethers the edge of the isolation membrane (IM) to the endoplasmic reticulum (ER) and mediates direct lipid transfer from ER to IM for IM expansion. Atg2 binds to the ER exit site (ERES), which is the membrane source for autophagosome formation, using basic residues in its N-terminal region (NR) and to the expanding edge of the IM through its C-terminal region. The latter binding is assisted by an atg18-PtdIns3P interaction. Atg2 then extracts phospholipids from the membrane source using its NR and transfers them to atg9 to the IM through its predicted beta-sheet-rich structure for membrane expansion. This Neosartorya fischeri (strain ATCC 1020 / DSM 3700 / CBS 544.65 / FGSC A1164 / JCM 1740 / NRRL 181 / WB 181) (Aspergillus fischerianus) protein is Autophagy-related protein 2 (atg2).